The following is a 344-amino-acid chain: KRR1 small subunit processome component homolog (344 aa).

Residues 125–193 (DIIKIGNLVH…VRDIVLETMN (69 aa)) form the KH domain. Over residues 232–245 (NISKRKQPKVKKQK) the composition is skewed to basic residues. Disordered stretches follow at residues 232-260 (NISK…ESKV) and 273-326 (QEQK…TKVD). Positions 270–295 (FLNQEQKQAKRNQGRTEKQKEAAKRQ) form a coiled coil. Basic and acidic residues-rich tracts occupy residues 283 to 302 (GRTE…RNKD) and 315 to 326 (RKKEDGSSTKVD).

Belongs to the KRR1 family. In terms of assembly, monomer. Component of the ribosomal small subunit (SSU) processome.

It localises to the nucleus. It is found in the nucleolus. In terms of biological role, required for 40S ribosome biogenesis. Involved in nucleolar processing of pre-18S ribosomal RNA and ribosome assembly. Binds to RNA. Required for female germline development, cell viability during eye development and for survival of dividing cells and epithelial cells during early wing disk development. This Drosophila yakuba (Fruit fly) protein is KRR1 small subunit processome component homolog.